Reading from the N-terminus, the 112-residue chain is ATP-dependent Clp protease adapter protein ClpS (112 aa).

It belongs to the ClpS family. In terms of assembly, binds to the N-terminal domain of the chaperone ClpA.

In terms of biological role, involved in the modulation of the specificity of the ClpAP-mediated ATP-dependent protein degradation. This chain is ATP-dependent Clp protease adapter protein ClpS, found in Rhodococcus opacus (strain B4).